Consider the following 728-residue polypeptide: Myb-related protein A (728 aa).

The interval 1 to 31 (MAGRARSEDEEEDGQFTEHDYDVSLQKGPKK) is disordered. HTH myb-type domains lie at 30 to 80 (KKPW…HKVL), 81 to 136 (SPEL…NPDV), and 137 to 187 (KKSS…KRKV). DNA-binding regions (H-T-H motif) lie at residues 57 to 80 (WGVV…HKVL), 109 to 132 (WSII…HNHL), and 160 to 183 (WAEI…NSTM). Residues 230–293 (IPRYSSLSHD…RKRVPSGSSL (64 aa)) are transcriptional activation domain. The interval 296 to 534 (SESYHMGESM…IRRSLMAVTP (239 aa)) is negative regulatory domain.

In terms of assembly, component of the DREAM complex.

The protein resides in the nucleus. In terms of biological role, transcription factor that specifically recognizes the sequence 5'-YAAC[GT]G-3'. Acts as a master regulator of male meiosis by promoting expression of piRNAs. The piRNA metabolic process mediates the repression of transposable elements during meiosis by forming complexes composed of piRNAs and Piwi proteins and governs the methylation and subsequent repression of transposons, which is essential for the germline integrity. This is Myb-related protein A (mybl1) from Xenopus laevis (African clawed frog).